Consider the following 224-residue polypeptide: MSASASTAADFVRFALDEGVLRFGSFKVKSGRISPYFFNAGLFNSGRSVGALAGFYAQALVDSGVAFDMLFGPAYKGIPLATATSVALAGHRAMAGRDVPFAFNRKEAKDHGEGGTLVGAPLTGKVVIIDDVITAGTSVRESVEIIRAAGAEPAAVLIALDRMERAGPDDALSPHSAVQDVARTYGIPVVSIASLADIMTLLQDDAQFAEHREAVQAYRSKYGV.

5-phospho-alpha-D-ribose 1-diphosphate is bound at residue K29. F37–F38 contributes to the orotate binding site. Residues Y75–K76, R105, K106, K109, H111, and D130–S138 each bind 5-phospho-alpha-D-ribose 1-diphosphate. Residues T134 and R162 each coordinate orotate.

This sequence belongs to the purine/pyrimidine phosphoribosyltransferase family. PyrE subfamily. Homodimer. Mg(2+) serves as cofactor.

It carries out the reaction orotidine 5'-phosphate + diphosphate = orotate + 5-phospho-alpha-D-ribose 1-diphosphate. It functions in the pathway pyrimidine metabolism; UMP biosynthesis via de novo pathway; UMP from orotate: step 1/2. Its function is as follows. Catalyzes the transfer of a ribosyl phosphate group from 5-phosphoribose 1-diphosphate to orotate, leading to the formation of orotidine monophosphate (OMP). The chain is Orotate phosphoribosyltransferase from Bordetella bronchiseptica (strain ATCC BAA-588 / NCTC 13252 / RB50) (Alcaligenes bronchisepticus).